The primary structure comprises 604 residues: Elongation factor 4 (604 aa).

The tr-type G domain occupies 9 to 191; the sequence is DAIRNFCIIA…AVISRVPAPA (183 aa). GTP is bound by residues 21 to 26 and 138 to 141; these read DHGKST and NKID.

It belongs to the TRAFAC class translation factor GTPase superfamily. Classic translation factor GTPase family. LepA subfamily.

It is found in the cell inner membrane. It carries out the reaction GTP + H2O = GDP + phosphate + H(+). In terms of biological role, required for accurate and efficient protein synthesis under certain stress conditions. May act as a fidelity factor of the translation reaction, by catalyzing a one-codon backward translocation of tRNAs on improperly translocated ribosomes. Back-translocation proceeds from a post-translocation (POST) complex to a pre-translocation (PRE) complex, thus giving elongation factor G a second chance to translocate the tRNAs correctly. Binds to ribosomes in a GTP-dependent manner. In Prosthecochloris aestuarii (strain DSM 271 / SK 413), this protein is Elongation factor 4.